A 220-amino-acid chain; its full sequence is Iron-sulfur cluster repair protein YtfE (220 aa).

Belongs to the RIC family. YtfE subfamily. Homodimer.

It is found in the cytoplasm. In terms of biological role, di-iron-containing protein involved in the repair of iron-sulfur clusters damaged by oxidative and nitrosative stress conditions. This chain is Iron-sulfur cluster repair protein YtfE, found in Escherichia coli O81 (strain ED1a).